Reading from the N-terminus, the 164-residue chain is Phosphopantetheine adenylyltransferase (164 aa).

T10 is a substrate binding site. ATP is bound by residues T10–F11 and H18. Substrate-binding residues include K42, L74, and R88. ATP contacts are provided by residues G89–R91, E99, and N124–T130.

This sequence belongs to the bacterial CoaD family. As to quaternary structure, homohexamer. The cofactor is Mg(2+).

The protein resides in the cytoplasm. It carries out the reaction (R)-4'-phosphopantetheine + ATP + H(+) = 3'-dephospho-CoA + diphosphate. It functions in the pathway cofactor biosynthesis; coenzyme A biosynthesis; CoA from (R)-pantothenate: step 4/5. Its function is as follows. Reversibly transfers an adenylyl group from ATP to 4'-phosphopantetheine, yielding dephospho-CoA (dPCoA) and pyrophosphate. The chain is Phosphopantetheine adenylyltransferase from Pseudoalteromonas translucida (strain TAC 125).